Reading from the N-terminus, the 247-residue chain is Dihydroorotate dehydrogenase B (NAD(+)), electron transfer subunit (247 aa).

The FAD-binding FR-type domain maps to 2–96 (RWKMKARVLS…TGPHGNGFEI (95 aa)). FAD is bound by residues 49–52 (RPFS), 64–66 (LYQ), and 71–72 (GT). Cysteine 210, cysteine 215, cysteine 218, and cysteine 234 together coordinate [2Fe-2S] cluster.

This sequence belongs to the PyrK family. Heterotetramer of 2 PyrK and 2 PyrD type B subunits. The cofactor is [2Fe-2S] cluster. It depends on FAD as a cofactor.

It participates in pyrimidine metabolism; UMP biosynthesis via de novo pathway; orotate from (S)-dihydroorotate (NAD(+) route): step 1/1. Responsible for channeling the electrons from the oxidation of dihydroorotate from the FMN redox center in the PyrD type B subunit to the ultimate electron acceptor NAD(+). In Caldanaerobacter subterraneus subsp. tengcongensis (strain DSM 15242 / JCM 11007 / NBRC 100824 / MB4) (Thermoanaerobacter tengcongensis), this protein is Dihydroorotate dehydrogenase B (NAD(+)), electron transfer subunit.